Consider the following 220-residue polypeptide: Uracil-DNA glycosylase (220 aa).

The active-site Proton acceptor is the D65.

The protein belongs to the uracil-DNA glycosylase (UDG) superfamily. UNG family.

It localises to the cytoplasm. It catalyses the reaction Hydrolyzes single-stranded DNA or mismatched double-stranded DNA and polynucleotides, releasing free uracil.. Excises uracil residues from the DNA which can arise as a result of misincorporation of dUMP residues by DNA polymerase or due to deamination of cytosine. The chain is Uracil-DNA glycosylase from Phocaeicola vulgatus (strain ATCC 8482 / DSM 1447 / JCM 5826 / CCUG 4940 / NBRC 14291 / NCTC 11154) (Bacteroides vulgatus).